The primary structure comprises 186 residues: Ribosome-recycling factor (186 aa).

The protein belongs to the RRF family.

The protein localises to the cytoplasm. Functionally, responsible for the release of ribosomes from messenger RNA at the termination of protein biosynthesis. May increase the efficiency of translation by recycling ribosomes from one round of translation to another. This Limosilactobacillus reuteri (Lactobacillus reuteri) protein is Ribosome-recycling factor.